A 222-amino-acid chain; its full sequence is Sortase A (222 aa).

Residues 1 to 7 lie on the Cytoplasmic side of the membrane; sequence MLKKTIA. The chain crosses the membrane as a helical span at residues 8–28; sequence IIILIIGLLLIFSPFIKNGIV. The Extracellular portion of the chain corresponds to 29-222; sequence KYMSGHETIE…ELENKYFPSK (194 aa). The active-site Proton donor/acceptor is His127. The Acyl-thioester intermediate role is filled by Cys188.

The protein belongs to the bacterial sortase family. Class A subfamily.

It is found in the cell membrane. Activity is enhanced by Zn(2+) and strongly enhanced by Ca(2+). Inhibited by chalcone, a precursor of several flavonoids, which blocks the SrtA active site. Its function is as follows. Transpeptidase that anchors surface proteins to the cell wall. Recognizes and modifies its substrate by proteolytic cleavage of a C-terminal sorting signal. Following cleavage, a covalent intermediate is formed via a thioester bond between the sortase and its substrate, which is then transferred and covalently attached to the cell wall. This sortase recognizes a Leu-Pro-x-Thr-Gly (LPXTG) motif, which is cleaved by the sortase between the threonine and glycine residues. Involved in pathogenesis. May regulate the rate of synthesis and/or the stability of a subset of LPXTG proteins. Not involved in cell wall-anchoring of Hbp2 (SvpA) or Hbp1. The polypeptide is Sortase A (Listeria monocytogenes serovar 1/2a (strain ATCC BAA-679 / EGD-e)).